The primary structure comprises 417 residues: NADH-quinone oxidoreductase subunit D (417 aa).

The protein belongs to the complex I 49 kDa subunit family. As to quaternary structure, NDH-1 is composed of 14 different subunits. Subunits NuoB, C, D, E, F, and G constitute the peripheral sector of the complex.

It is found in the cell inner membrane. The enzyme catalyses a quinone + NADH + 5 H(+)(in) = a quinol + NAD(+) + 4 H(+)(out). Its function is as follows. NDH-1 shuttles electrons from NADH, via FMN and iron-sulfur (Fe-S) centers, to quinones in the respiratory chain. The immediate electron acceptor for the enzyme in this species is believed to be ubiquinone. Couples the redox reaction to proton translocation (for every two electrons transferred, four hydrogen ions are translocated across the cytoplasmic membrane), and thus conserves the redox energy in a proton gradient. The protein is NADH-quinone oxidoreductase subunit D of Francisella tularensis subsp. holarctica (strain FTNF002-00 / FTA).